Here is a 173-residue protein sequence, read N- to C-terminus: Oleosin 18.5 kDa (173 aa).

The interval 1–45 (MADTARGTHHDIIGRDQYPMMGRDRDQYQMSGRGSDYSKSRQIAK) is polar. The tract at residues 46-117 (AATAVTAGGS…AAITVFSWIY (72 aa)) is hydrophobic. The next 3 membrane-spanning stretches (helical) occupy residues 54–74 (GSLL…LTVA), 76–96 (PLLV…ALLI), and 97–117 (TGFL…SWIY). The tract at residues 151 to 173 (YYGQQHTGGEHDRDRTRGGQHTT) is disordered. The segment covering 158–167 (GGEHDRDRTR) has biased composition (basic and acidic residues).

Belongs to the oleosin family.

Its subcellular location is the lipid droplet. It localises to the membrane. Functionally, may have a structural role to stabilize the lipid body during desiccation of the seed by preventing coalescence of the oil. Probably interacts with both lipid and phospholipid moieties of lipid bodies. May also provide recognition signals for specific lipase anchorage in lipolysis during seedling growth. This Arabidopsis thaliana (Mouse-ear cress) protein is Oleosin 18.5 kDa.